A 62-amino-acid polypeptide reads, in one-letter code: Conotoxin reg3.5 (62 aa).

Positions 1-22 (MMFKLGVLLTICLLLFPLTGTA) are cleaved as a signal peptide. A propeptide spanning residues 23 to 49 (LDGDQLAEHMLDISSGINDRWFDPVRK) is cleaved from the precursor. Disulfide bonds link Cys-50–Cys-60, Cys-51–Cys-58, and Cys-56–Cys-61.

The protein belongs to the conotoxin M superfamily. As to expression, expressed by the venom duct.

The protein resides in the secreted. The polypeptide is Conotoxin reg3.5 (Conus regius (Crown cone)).